Here is a 442-residue protein sequence, read N- to C-terminus: Endothelin receptor type B (442 aa).

An N-terminal signal peptide occupies residues 1–26 (MQPPPSLCGRALVALVLACGLSRIWG). Topologically, residues 27 to 101 (EERGFPPDRA…GPIEIKETFK (75 aa)) are extracellular. An N-linked (GlcNAc...) asparagine glycan is attached at N59. The disordered stretch occupies residues 69–88 (AEVPKGDRTAGSPPRTISPP). A helical membrane pass occupies residues 102 to 126 (YINTVVSCLVFVLGIIGNSTLLRII). Residues 127–137 (YKNKCMRNGPN) are Cytoplasmic-facing. Residues 138-163 (ILIASLALGDLLHIVIDIPINVYKLL) form a helical membrane-spanning segment. The Extracellular segment spans residues 164-175 (AEDWPFGAEMCK). Residues C174 and C255 are joined by a disulfide bond. Residues 176 to 197 (LVPFIQKASVGITVLSLCALSI) form a helical membrane-spanning segment. The Cytoplasmic segment spans residues 198–218 (DRYRAVASWSRIKGIGVPKWT). The chain crosses the membrane as a helical span at residues 219 to 243 (AVEIVLIWVVSVVLAVPEAIGFDII). The Extracellular segment spans residues 244-271 (TMDYKGSYLRICLLHPVQKTAFMQFYKT). Residues 272–296 (AKDWWLFSFYFCLPLAITAFFYTLM) traverse the membrane as a helical segment. Residues 297 to 324 (TCEMLRKKSGMQIALNDHLKQRREVAKT) are Cytoplasmic-facing. A Phosphoserine modification is found at S305. A helical membrane pass occupies residues 325–350 (VFCLVLVFALCWLPLHLSRILKLTLY). At 351–362 (NQNDPNRCELLS) the chain is on the extracellular side. A helical transmembrane segment spans residues 363–389 (FLLVLDYIGINMASLNSCINPIALYLV). Residues 390 to 442 (SKRFKNCFKSCLCCWCQSFEEKQSLEEKQSCLKFKANDHGYDNFRSSNKYSSS) are Cytoplasmic-facing. S-palmitoyl cysteine attachment occurs at residues C402, C403, and C405. Position 419 is a phosphoserine (S419). Y439 carries the post-translational modification Phosphotyrosine. Residues S440, S441, and S442 each carry the phosphoserine modification.

The protein belongs to the G-protein coupled receptor 1 family. Endothelin receptor subfamily. EDNRB sub-subfamily. Post-translationally, palmitoylation of Cys-402 was confirmed by the palmitoylation of Cys-402 in a deletion mutant lacking both Cys-403 and Cys-405. Expressed in placental stem villi vessels, but not in cultured placental villi smooth muscle cells.

The protein resides in the cell membrane. Its function is as follows. Non-specific receptor for endothelin 1, 2, and 3. Mediates its action by association with G proteins that activate a phosphatidylinositol-calcium second messenger system. This Homo sapiens (Human) protein is Endothelin receptor type B.